Here is a 411-residue protein sequence, read N- to C-terminus: Dual-specificity RNA methyltransferase RlmN (411 aa).

Glu125 functions as the Proton acceptor in the catalytic mechanism. In terms of domain architecture, Radical SAM core spans 131 to 380 (EEGRGTLCVS…IRTPRGRDIL (250 aa)). Cys138 and Cys383 form a disulfide bridge. [4Fe-4S] cluster is bound by residues Cys145, Cys149, and Cys152. S-adenosyl-L-methionine contacts are provided by residues 209 to 210 (GE), Ser241, 263 to 265 (SLH), and Asn340. Cys383 acts as the S-methylcysteine intermediate in catalysis.

Belongs to the radical SAM superfamily. RlmN family. The cofactor is [4Fe-4S] cluster.

It is found in the cytoplasm. It carries out the reaction adenosine(2503) in 23S rRNA + 2 reduced [2Fe-2S]-[ferredoxin] + 2 S-adenosyl-L-methionine = 2-methyladenosine(2503) in 23S rRNA + 5'-deoxyadenosine + L-methionine + 2 oxidized [2Fe-2S]-[ferredoxin] + S-adenosyl-L-homocysteine. The catalysed reaction is adenosine(37) in tRNA + 2 reduced [2Fe-2S]-[ferredoxin] + 2 S-adenosyl-L-methionine = 2-methyladenosine(37) in tRNA + 5'-deoxyadenosine + L-methionine + 2 oxidized [2Fe-2S]-[ferredoxin] + S-adenosyl-L-homocysteine. Functionally, specifically methylates position 2 of adenine 2503 in 23S rRNA and position 2 of adenine 37 in tRNAs. m2A2503 modification seems to play a crucial role in the proofreading step occurring at the peptidyl transferase center and thus would serve to optimize ribosomal fidelity. The sequence is that of Dual-specificity RNA methyltransferase RlmN from Brucella anthropi (strain ATCC 49188 / DSM 6882 / CCUG 24695 / JCM 21032 / LMG 3331 / NBRC 15819 / NCTC 12168 / Alc 37) (Ochrobactrum anthropi).